A 312-amino-acid chain; its full sequence is Olfactory receptor 6N1 (312 aa).

The Extracellular portion of the chain corresponds to 1–25; sequence MDTGNWSQVAEFIILGFPHLQGVQI. An N-linked (GlcNAc...) asparagine glycan is attached at Asn5. Residues 26–46 traverse the membrane as a helical segment; that stretch reads YLFLLLLLIYLMTVLGNLLIF. The Cytoplasmic segment spans residues 47 to 54; it reads LVVCLDSR. A helical membrane pass occupies residues 55-75; it reads LHTPMYHFVSILSFSELGYTA. Topologically, residues 76–99 are extracellular; it reads ATIPKMLANLLSEKKTISFSGCLL. Cys97 and Cys189 are disulfide-bonded. A helical transmembrane segment spans residues 100 to 120; the sequence is QIYFFHSLGATECYLLTAMAY. The Cytoplasmic portion of the chain corresponds to 121 to 139; sequence DRYLAICRPLHYPTLMTPT. The helical transmembrane segment at 140–160 threads the bilayer; the sequence is LCAEIAIGCWLGGLAGPVVEI. Residues 161 to 197 are Extracellular-facing; the sequence is SLISRLPFCGPNRIQHVFCDFPPVLSLACTDTSINVL. Residues 198 to 217 form a helical membrane-spanning segment; sequence VDFVINSCKILATFLLILCS. Residues 218–237 lie on the Cytoplasmic side of the membrane; it reads YVQIICTVLRIPSAAGKRKA. A helical membrane pass occupies residues 238-258; the sequence is ISTCASHFTVVLIFYGSILSM. At 259–271 the chain is on the extracellular side; the sequence is YVQLKKSYSLDYD. A helical membrane pass occupies residues 272 to 292; that stretch reads QALAVVYSVLTPFLNPFIYSL. Over 293–312 the chain is Cytoplasmic; that stretch reads RNKEIKEAVRRQLKRIGILA.

The protein belongs to the G-protein coupled receptor 1 family.

The protein localises to the cell membrane. Its function is as follows. Odorant receptor. The sequence is that of Olfactory receptor 6N1 (OR6N1) from Homo sapiens (Human).